A 148-amino-acid chain; its full sequence is uncharacterized protein (148 aa).

This is an uncharacterized protein from Pyrococcus woesei.